The following is a 181-amino-acid chain: Large ribosomal subunit protein uL6 (181 aa).

Belongs to the universal ribosomal protein uL6 family. Part of the 50S ribosomal subunit.

This protein binds to the 23S rRNA, and is important in its secondary structure. It is located near the subunit interface in the base of the L7/L12 stalk, and near the tRNA binding site of the peptidyltransferase center. This chain is Large ribosomal subunit protein uL6, found in Synechococcus sp. (strain CC9605).